Here is a 425-residue protein sequence, read N- to C-terminus: tRNA(Met) cytidine acetate ligase (425 aa).

Residues 7–20 (VVEY…HLHH), Gly-102, Asn-162, and 187–188 (RI) each bind ATP.

It belongs to the TmcAL family.

The protein localises to the cytoplasm. The catalysed reaction is cytidine(34) in elongator tRNA(Met) + acetate + ATP = N(4)-acetylcytidine(34) in elongator tRNA(Met) + AMP + diphosphate. Its function is as follows. Catalyzes the formation of N(4)-acetylcytidine (ac(4)C) at the wobble position of elongator tRNA(Met), using acetate and ATP as substrates. First activates an acetate ion to form acetyladenylate (Ac-AMP) and then transfers the acetyl group to tRNA to form ac(4)C34. This Fervidobacterium nodosum (strain ATCC 35602 / DSM 5306 / Rt17-B1) protein is tRNA(Met) cytidine acetate ligase.